The chain runs to 102 residues: NADH-quinone oxidoreductase subunit K (102 aa).

A run of 3 helical transmembrane segments spans residues 6-26, 30-50, and 62-82; these read MEHG…GLMV, ILFV…AFVV, and IMFI…LAIL.

This sequence belongs to the complex I subunit 4L family. In terms of assembly, NDH-1 is composed of 13 different subunits. Subunits NuoA, H, J, K, L, M, N constitute the membrane sector of the complex.

The protein resides in the cell inner membrane. The catalysed reaction is a quinone + NADH + 5 H(+)(in) = a quinol + NAD(+) + 4 H(+)(out). In terms of biological role, NDH-1 shuttles electrons from NADH, via FMN and iron-sulfur (Fe-S) centers, to quinones in the respiratory chain. The immediate electron acceptor for the enzyme in this species is believed to be ubiquinone. Couples the redox reaction to proton translocation (for every two electrons transferred, four hydrogen ions are translocated across the cytoplasmic membrane), and thus conserves the redox energy in a proton gradient. The polypeptide is NADH-quinone oxidoreductase subunit K (Azotobacter vinelandii (strain DJ / ATCC BAA-1303)).